The primary structure comprises 314 residues: Oxidoreductase NAD-binding domain-containing protein 1 (314 aa).

An N-terminal signal peptide occupies residues methionine 1–glycine 18. Positions glutamate 63–glutamine 166 constitute an FAD-binding FR-type domain. Glycine 180 to proline 185 is a binding site for NAD(+).

The protein is Oxidoreductase NAD-binding domain-containing protein 1 (oxnad1) of Xenopus laevis (African clawed frog).